Consider the following 178-residue polypeptide: Gluconokinase (178 aa).

An ATP-binding site is contributed by 19–26 (GVSGTGKT).

It belongs to the gluconokinase GntK/GntV family. Monomer.

The catalysed reaction is D-gluconate + ATP = 6-phospho-D-gluconate + ADP + H(+). It participates in carbohydrate acid metabolism; D-gluconate degradation. Activated by magnesium. Functionally, phosphorylates gluconate to 6-phosphogluconate. The protein is Gluconokinase of Gluconobacter oxydans (strain 621H) (Gluconobacter suboxydans).